The primary structure comprises 1020 residues: Sodium/potassium-transporting ATPase subunit alpha-2 (1020 aa).

Positions 1 to 5 (MGRGA) are excised as a propeptide. The segment at 1-31 (MGRGAGREYSPAATTAENGGGKKKQKEKELD) is disordered. At 6–85 (GREYSPAATT…NALTPPPTTP (80 aa)) the chain is on the cytoplasmic side. Phosphoserine is present on S10. The interaction with phosphoinositide-3 kinase stretch occupies residues 80-82 (PPP). Residues 86 to 106 (EWVKFCRQLFGGFSILLWIGA) traverse the membrane as a helical segment. At 107–129 (ILCFLAYGIQAAMEDEPSNDNLY) the chain is on the extracellular side. Residues 130–150 (LGVVLAAVVIVTGCFSYYQEA) traverse the membrane as a helical segment. The Cytoplasmic portion of the chain corresponds to 151 to 286 (KSSKIMDSFK…VGRTPIAMEI (136 aa)). The span at 212–227 (DNSSLTGESEPQTRSP) shows a compositional bias: polar residues. Residues 212-231 (DNSSLTGESEPQTRSPEFTH) form a disordered region. Residues 287 to 306 (EHFIQLITGVAVFPGVSFFV) traverse the membrane as a helical segment. Residues 307-318 (LSLILGYSWLEA) lie on the Extracellular side of the membrane. The chain crosses the membrane as a helical span at residues 319 to 336 (VIFLIGIIVANVPEGLLA). Residues 337-769 (TVTVCLTLTA…EEGRLVFDNL (433 aa)) are Cytoplasmic-facing. D374 (4-aspartylphosphate intermediate) is an active-site residue. Phosphoserine occurs at positions 439, 450, 496, and 559. Residue T570 is modified to Phosphothreonine. Residues S587 and S672 each carry the phosphoserine modification. The Mg(2+) site is built by D714 and D718. The helical transmembrane segment at 770–789 (KKSIAYTLTSNIPEITPFLL) threads the bilayer. Over 790–799 (FIIANIPLPL) the chain is Extracellular. A helical membrane pass occupies residues 800 to 820 (GTVTILCIDLGTDMVPAISLA). The Cytoplasmic segment spans residues 821-840 (YEAAESDIMKRQPRNSQTDK). Residue S826 is modified to Phosphoserine. Residues 841-863 (LVNERLISMAYGQIGMIQALGGF) form a helical membrane-spanning segment. Residues 864 to 915 (FTYFVILAENGFLPSRLLGIRLDWDDRTMNDLEDSYGQEWTYEQRKVVEFTC) are Extracellular-facing. The helical transmembrane segment at 916–935 (HTAFFASIVVVQWADLIICK) threads the bilayer. At 936–948 (TRRNSVFQQGMKN) the chain is on the cytoplasmic side. S940 bears the Phosphoserine; by PKA mark. The helical transmembrane segment at 949–967 (KILIFGLLEETALAAFLSY) threads the bilayer. Over 968 to 982 (CPGMGVALRMYPLKV) the chain is Extracellular. The helical transmembrane segment at 983-1003 (TWWFCAFPYSLLIFIYDEVRK) threads the bilayer. Topologically, residues 1004 to 1020 (LILRRYPGGWVEKETYY) are cytoplasmic.

It belongs to the cation transport ATPase (P-type) (TC 3.A.3) family. Type IIC subfamily. As to quaternary structure, the sodium/potassium-transporting ATPase is composed of a catalytic alpha subunit, an auxiliary non-catalytic beta subunit and an additional regulatory subunit. Interacts with regulatory subunit FXYD1.

The protein resides in the membrane. It is found in the cell membrane. It carries out the reaction K(+)(out) + Na(+)(in) + ATP + H2O = K(+)(in) + Na(+)(out) + ADP + phosphate + H(+). In terms of biological role, this is the catalytic component of the active enzyme, which catalyzes the hydrolysis of ATP coupled with the exchange of sodium and potassium ions across the plasma membrane. This action creates the electrochemical gradient of sodium and potassium, providing the energy for active transport of various nutrients. The chain is Sodium/potassium-transporting ATPase subunit alpha-2 (ATP1A2) from Pongo abelii (Sumatran orangutan).